A 492-amino-acid polypeptide reads, in one-letter code: Fascin-2 (492 aa).

This sequence belongs to the fascin family. Exclusively expressed in the eye, specifically in photoreceptor cells.

It localises to the cytoplasm. The protein resides in the cytoskeleton. The protein localises to the cell projection. It is found in the stereocilium. In terms of biological role, acts as an actin bundling protein. May play a pivotal role in photoreceptor cell-specific events, such as disk morphogenesis. This is Fascin-2 (FSCN2) from Bos taurus (Bovine).